The sequence spans 171 residues: Sec-independent protein translocase protein TatB (171 aa).

A helical transmembrane segment spans residues 2-22 (FDGIGFMELLLIGVLGLVVLG). Positions 69-171 (SKGLSNLSPE…DTRSNPKANG (103 aa)) are disordered. The segment covering 88 to 97 (QAAQSVNRPY) has biased composition (polar residues). Low complexity-rich tracts occupy residues 114 to 130 (HSPV…HTSP) and 138 to 158 (PTAT…SEPS). Residues 160 to 171 (GADTRSNPKANG) show a composition bias toward polar residues.

This sequence belongs to the TatB family. In terms of assembly, the Tat system comprises two distinct complexes: a TatABC complex, containing multiple copies of TatA, TatB and TatC subunits, and a separate TatA complex, containing only TatA subunits. Substrates initially bind to the TatABC complex, which probably triggers association of the separate TatA complex to form the active translocon.

The protein resides in the cell inner membrane. Functionally, part of the twin-arginine translocation (Tat) system that transports large folded proteins containing a characteristic twin-arginine motif in their signal peptide across membranes. Together with TatC, TatB is part of a receptor directly interacting with Tat signal peptides. TatB may form an oligomeric binding site that transiently accommodates folded Tat precursor proteins before their translocation. The chain is Sec-independent protein translocase protein TatB from Shewanella baltica (strain OS185).